A 257-amino-acid chain; its full sequence is Zinc import ATP-binding protein ZnuC (257 aa).

An ABC transporter domain is found at Ile-6–Asn-221. ATP is bound at residue Gly-38 to Thr-45.

Belongs to the ABC transporter superfamily. Zinc importer (TC 3.A.1.15.5) family. As to quaternary structure, the complex is composed of two ATP-binding proteins (ZnuC), two transmembrane proteins (ZnuB) and a solute-binding protein (ZnuA).

The protein resides in the cell inner membrane. It catalyses the reaction Zn(2+)(out) + ATP(in) + H2O(in) = Zn(2+)(in) + ADP(in) + phosphate(in) + H(+)(in). In terms of biological role, part of the ABC transporter complex ZnuABC involved in zinc import. Responsible for energy coupling to the transport system. In Pseudomonas entomophila (strain L48), this protein is Zinc import ATP-binding protein ZnuC.